The following is a 494-amino-acid chain: Putative bifunctional dihydrofolate reductase-thymidylate synthase (494 aa).

The 167-residue stretch at 1–167 (MGIGKDGTLP…IKHSFISFVR (167 aa)) folds into the DHFR domain. 2-8 (GIGKDGT) is a binding site for NADP(+). Asp-16 provides a ligand contact to substrate. Residues 40 to 42 (RKT) and 61 to 64 (LTRS) each bind NADP(+). Ile-103 contributes to the substrate binding site. NADP(+) is bound at residue 104–111 (GGGEILRQ). Substrate is bound at residue Thr-124. Residues 170–494 (KSIAEANDSS…HHKIEMKMAV (325 aa)) form a thymidylate synthase region. DUMP is bound at residue Arg-231. Cys-376 is a catalytic residue. DUMP is bound by residues His-377, 395–399 (QRSAD), Asn-407, and 437–439 (HVY).

In the N-terminal section; belongs to the dihydrofolate reductase family. It in the C-terminal section; belongs to the thymidylate synthase family.

It catalyses the reaction (6S)-5,6,7,8-tetrahydrofolate + NADP(+) = 7,8-dihydrofolate + NADPH + H(+). The enzyme catalyses dUMP + (6R)-5,10-methylene-5,6,7,8-tetrahydrofolate = 7,8-dihydrofolate + dTMP. Its pathway is cofactor biosynthesis; tetrahydrofolate biosynthesis; 5,6,7,8-tetrahydrofolate from 7,8-dihydrofolate: step 1/1. Functionally, bifunctional enzyme. Involved in de novo dTMP biosynthesis. Key enzyme in folate metabolism. Can play two different roles depending on the source of dihydrofolate: de novo synthesis of tetrahydrofolate or recycling of the dihydrofolate released as one of the end products of the TS catalyzed reaction. Catalyzes an essential reaction for de novo glycine and purine synthesis, DNA precursor synthesis, and for the conversion of dUMP to dTMP. The protein is Putative bifunctional dihydrofolate reductase-thymidylate synthase of Oryza sativa subsp. japonica (Rice).